The primary structure comprises 105 residues: Cuticle protein AM1159 (105 aa).

The Chitin-binding type R&amp;R domain occupies 16-81 (DGNFNYNFQT…PESPLLPVGP (66 aa)). The tract at residues 25-46 (TSNGIEDTKTGTPGSQGQSNMQ) is disordered.

Arthrodial membrane.

The sequence is that of Cuticle protein AM1159 from Cancer pagurus (Rock crab).